An 823-amino-acid polypeptide reads, in one-letter code: Ubiquitin carboxyl-terminal hydrolase 16 (823 aa).

The UBP-type zinc finger occupies 22-142 (PVCRHIRKGL…QVVDYVRKQA (121 aa)). Zn(2+)-binding residues include cysteine 24, histidine 26, cysteine 48, cysteine 51, cysteine 74, cysteine 77, cysteine 82, histidine 90, histidine 94, histidine 103, cysteine 116, and cysteine 119. A Glycyl lysine isopeptide (Lys-Gly) (interchain with G-Cter in SUMO2) cross-link involves residue lysine 140. A disordered region spans residues 146-189 (TPKPAEKDNGNIELENKKLEKESKNEQEREKKENMAKENPPMNS). The span at 149–181 (PAEKDNGNIELENKKLEKESKNEQEREKKENMA) shows a compositional bias: basic and acidic residues. Serine 189 carries the phosphoserine modification. The USP domain maps to 196-822 (KGLSNLGNTC…QAYLLFYERI (627 aa)). The active-site Nucleophile is the cysteine 205. The span at 394-408 (SGKKSVNDKNLKKTV) shows a compositional bias: basic and acidic residues. The disordered stretch occupies residues 394–460 (SGKKSVNDKN…AKNQRRQQKI (67 aa)). A compositionally biased stretch (acidic residues) spans 409-420 (EDEDQDSEEEKD). Position 415 is a phosphoserine (serine 415). Residues 421–430 (NDSYIKERSD) are compositionally biased toward basic and acidic residues. Basic residues predominate over residues 438–458 (HLQKKAKKQAKKQAKNQRRQQ). Phosphoserine occurs at positions 531 and 552. At threonine 554 the chain carries Phosphothreonine. The Proton acceptor role is filled by histidine 758.

This sequence belongs to the peptidase C19 family. USP16 subfamily. In terms of assembly, homotetramer. Associates with late pre-40S ribosomes. Interacts with CEP78; promoting deubiquitination of tektins. Post-translationally, phosphorylated at the onset of mitosis and dephosphorylated during the metaphase/anaphase transition. Phosphorylation by AURKB enhances the deubiquitinase activity. Present in all the tissues examined including fetal brain, lung, liver, kidney, and adult heart, brain, placenta, lung, liver, skeletal muscle, kidney and pancreas.

It localises to the nucleus. The protein localises to the cytoplasm. The enzyme catalyses Thiol-dependent hydrolysis of ester, thioester, amide, peptide and isopeptide bonds formed by the C-terminal Gly of ubiquitin (a 76-residue protein attached to proteins as an intracellular targeting signal).. Its function is as follows. Specifically deubiquitinates 'Lys-120' of histone H2A (H2AK119Ub), a specific tag for epigenetic transcriptional repression, thereby acting as a coactivator. Deubiquitination of histone H2A is a prerequisite for subsequent phosphorylation at 'Ser-11' of histone H3 (H3S10ph), and is required for chromosome segregation when cells enter into mitosis. In resting B- and T-lymphocytes, phosphorylation by AURKB leads to enhance its activity, thereby maintaining transcription in resting lymphocytes. Regulates Hox gene expression via histone H2A deubiquitination. Prefers nucleosomal substrates. Does not deubiquitinate histone H2B. Also deubiquitinates non-histone proteins, such as ribosomal protein RPS27A: deubiquitination of monoubiquitinated RPS27A promotes maturation of the 40S ribosomal subunit. Also mediates deubiquitination of tektin proteins (TEKT1, TEKT2, TEK3, TEKT4 and TEKT5), promoting their stability. The sequence is that of Ubiquitin carboxyl-terminal hydrolase 16 from Homo sapiens (Human).